Reading from the N-terminus, the 456-residue chain is ACT domain-containing protein ACR5 (456 aa).

4 ACT domains span residues 39-115 (VIKV…FSPS), 130-207 (VVEL…SSGR), 271-347 (IVMI…VSEG), and 349-432 (KLEL…PSPQ).

As to expression, expressed in stems and siliques.

In terms of biological role, may bind amino acids. The protein is ACT domain-containing protein ACR5 of Arabidopsis thaliana (Mouse-ear cress).